We begin with the raw amino-acid sequence, 61 residues long: Conotoxin TxMRCL-04 (61 aa).

Positions 1–22 (MRCLPVFVILLLLIASTPSVDA) are cleaved as a signal peptide. A propeptide spanning residues 23 to 46 (QLKTKDDMSLASFHDNVKRILQIR) is cleaved from the precursor.

Belongs to the conotoxin T superfamily. Post-translationally, contains 2 disulfide bonds that can be either 'C1-C3, C2-C4' or 'C1-C4, C2-C3', since these disulfide connectivities have been observed for conotoxins with cysteine framework V (for examples, see AC P0DQQ7 and AC P81755). In terms of tissue distribution, expressed by the venom duct.

The protein resides in the secreted. In Conus textile (Cloth-of-gold cone), this protein is Conotoxin TxMRCL-04.